The primary structure comprises 452 residues: Adenylosuccinate synthetase isozyme 1 (452 aa).

Residues 1 to 22 (MSGTRASNDRSSHPGGHKRPRY) are disordered. Residues 37–43 (GDEGKGK) and 65–67 (GHT) contribute to the GTP site. Residue Asp-38 is the Proton acceptor of the active site. Mg(2+) contacts are provided by Asp-38 and Gly-65. Asp-38 is a substrate binding site. Residues 38 to 41 (DEGK), 63 to 66 (NAGH), Thr-158, Arg-172, Asn-251, Thr-266, and Arg-330 each bind IMP. The Proton donor role is filled by His-66. 326–332 (VTTGRKR) is a binding site for substrate. Residues Arg-332, 358 to 360 (KLD), and 440 to 443 (GVGK) contribute to the GTP site.

This sequence belongs to the adenylosuccinate synthetase family. Homodimer. Mg(2+) serves as cofactor.

The protein resides in the cytoplasm. It carries out the reaction IMP + L-aspartate + GTP = N(6)-(1,2-dicarboxyethyl)-AMP + GDP + phosphate + 2 H(+). Its pathway is purine metabolism; AMP biosynthesis via de novo pathway; AMP from IMP: step 1/2. In terms of biological role, component of the purine nucleotide cycle (PNC), which interconverts IMP and AMP to regulate the nucleotide levels in various tissues, and which contributes to glycolysis and ammoniagenesis. Catalyzes the first committed step in the biosynthesis of AMP from IMP. The polypeptide is Adenylosuccinate synthetase isozyme 1 (adss1) (Xenopus tropicalis (Western clawed frog)).